The primary structure comprises 107 residues: MKTNRNRPINILIVFFLLTTARAATRNWTNRTHRTVPKVQHAYYAYPHRSCESFSRPYARSMCIELERIHRSSRQPLFSPPPPPTEIDQRYGVEKRLVPSGPNPLHN.

An N-terminal signal peptide occupies residues 1 to 23 (MKTNRNRPINILIVFFLLTTARA). N-linked (GlcNAc...) asparagine glycosylation is found at Asn27 and Asn30. The disordered stretch occupies residues 73–107 (SRQPLFSPPPPPTEIDQRYGVEKRLVPSGPNPLHN). The span at 87 to 97 (IDQRYGVEKRL) shows a compositional bias: basic and acidic residues. Hydroxyproline is present on residues Pro99 and Pro102. O-linked (Ara...) hydroxyproline glycosylation occurs at Pro102.

It belongs to the CLV3/ESR signal peptide family. Post-translationally, the O-glycosylation (arabinosylation) of the hydroxyproline Pro-102 enhances binding affinity of the CLE10p peptide for its receptor. As to expression, expressed in stems, apex, leaves, flowers, siliques and pollen.

It localises to the secreted. Its subcellular location is the extracellular space. Functionally, extracellular signal peptide that regulates cell fate. Represses root apical meristem maintenance. Regulates the transition of protophloem cells from proliferation to differentiation, thus impinging on postembryonic growth capacity of the root meristem; this signaling pathway requires CRN and CLV2. In Arabidopsis thaliana (Mouse-ear cress), this protein is CLAVATA3/ESR (CLE)-related protein 10.